Consider the following 607-residue polypeptide: NAD-dependent protein deacetylase sir-2.1 (607 aa).

Positions 1-68 (MSRDSGNDSE…SVSSESWQNN (68 aa)) are disordered. Over residues 55 to 64 (ESTTSVSSES) the composition is skewed to low complexity. The Deacetylase sirtuin-type domain maps to 128–401 (KLTNYNSLAD…DSIMEQQGKT (274 aa)). NAD(+)-binding positions include 153–172 (GAGVSVSCGIPDFRSKDGIY) and 237–240 (QNID). The active-site Proton acceptor is the His255. 4 residues coordinate Zn(2+): Cys263, Cys266, Cys287, and Cys290. Residues 327–329 (GSS), 352–354 (NRE), and Cys369 contribute to the NAD(+) site. The interval 426–453 (EKRNDDSSDEPTLKKPRMSVADDSMDSE) is disordered.

The protein belongs to the sirtuin family. Class I subfamily. In terms of assembly, interacts with ftt-2 and par-5. Interacts with daf-16 following heat-shock, which causes daf-16 to accumulate in the nucleus. Interaction with daf-16 is promoted by ftt-2. Interacts with transcriptional coregulator hcf-1. Zn(2+) serves as cofactor.

Its subcellular location is the nucleus. It is found in the cytoplasm. It catalyses the reaction N(6)-acetyl-L-lysyl-[protein] + NAD(+) + H2O = 2''-O-acetyl-ADP-D-ribose + nicotinamide + L-lysyl-[protein]. Functionally, NAD-dependent deacetylase. Involved in metabolism, apoptosis, response to oxidative stress, response to DNA damage, and determination of lifespan. Required for a reduction of the 'Lys-16' acetylation of histone H4 (H4K16ac) on dosage-compensated X chromosomes in hermaphrodites. Plays a role in germ cell and somatic cell apoptosis in response to DNA damage. Functions upstream of daf-16/Forkhead box protein O in the Insulin/IGF-1-like signaling (IIS) mediated pathway, promoting daf-16 mediated transcriptional activation and increased lifespan. May also regulate lifespan independently of daf-16 by modulating the transcription of genes involved in the stress response of the endoplasmic reticulum (ER). Functions upstream of transcriptional coregulator hcf-1, perhaps acting independently of the IIS mediated pathway, to modulate lifespan and oxidative stress response. Acts upstream of the nicotinic acid metabolism pathway, which may be linked to the regulation of longevity. Plays a role in ascaroside-mediated longevity and stress resistance. The protein is NAD-dependent protein deacetylase sir-2.1 of Caenorhabditis elegans.